The chain runs to 79 residues: DNA-directed RNA polymerase subunit omega (79 aa).

It belongs to the RNA polymerase subunit omega family. The RNAP catalytic core consists of 2 alpha, 1 beta, 1 beta' and 1 omega subunit. When a sigma factor is associated with the core the holoenzyme is formed, which can initiate transcription.

It carries out the reaction RNA(n) + a ribonucleoside 5'-triphosphate = RNA(n+1) + diphosphate. Its function is as follows. Promotes RNA polymerase assembly. Latches the N- and C-terminal regions of the beta' subunit thereby facilitating its interaction with the beta and alpha subunits. The protein is DNA-directed RNA polymerase subunit omega of Kosmotoga olearia (strain ATCC BAA-1733 / DSM 21960 / TBF 19.5.1).